The chain runs to 269 residues: GTP cyclohydrolase FolE2 (269 aa).

Belongs to the GTP cyclohydrolase IV family.

The catalysed reaction is GTP + H2O = 7,8-dihydroneopterin 3'-triphosphate + formate + H(+). It functions in the pathway cofactor biosynthesis; 7,8-dihydroneopterin triphosphate biosynthesis; 7,8-dihydroneopterin triphosphate from GTP: step 1/1. In terms of biological role, converts GTP to 7,8-dihydroneopterin triphosphate. In Burkholderia mallei (strain NCTC 10229), this protein is GTP cyclohydrolase FolE2.